Consider the following 145-residue polypeptide: MKLTLAVVVVFAYIATTNAINPAILAAMTGGGGGNFKQMLLMDALFKNQNIGGGGGGGGGVLGGGQSQFAKMIMTKMLLKQFGENPLAAMTLMGNQNIDPMTLIALSGGENMQAIIPIIMRQQMQQQMRSQMPPVGALGTQMTPM.

The first 19 residues, M1–A19, serve as a signal peptide directing secretion.

As to expression, component of the acid-insoluble and acid-soluble organic matrix of calcified layers of the shell (at protein level).

The protein resides in the secreted. In Lottia gigantea (Giant owl limpet), this protein is Glycine-rich protein.